Reading from the N-terminus, the 221-residue chain is Putative adhesin P1-like protein MPN_131 (221 aa).

Residues Arg-13–Asn-36 are compositionally biased toward low complexity. Disordered regions lie at residues Arg-13–Val-51 and Gly-90–Gly-183. Positions Ala-37–Asn-48 are enriched in polar residues. Basic and acidic residues predominate over residues Leu-130–Gly-139. 2 stretches are compositionally biased toward polar residues: residues Ser-149–Pro-160 and His-174–Gly-183.

Belongs to the adhesin P1 family.

This is Putative adhesin P1-like protein MPN_131 from Mycoplasma pneumoniae (strain ATCC 29342 / M129 / Subtype 1) (Mycoplasmoides pneumoniae).